Here is a 106-residue protein sequence, read N- to C-terminus: Large ribosomal subunit protein eL42 (106 aa).

This sequence belongs to the eukaryotic ribosomal protein eL42 family.

The protein resides in the cytoplasm. The sequence is that of Large ribosomal subunit protein eL42 (RPL44) from Trypanosoma brucei brucei.